The following is a 1022-amino-acid chain: ATPase MORC2B (1022 aa).

Alanine 2 is subject to N-acetylalanine. Residues asparagine 39, 87-89 (SAK), and 99-105 (RYGNGLK) contribute to the ATP site. Asparagine 39 lines the Mg(2+) pocket. Positions 285-362 (KTRAEQEVKK…RDAKQQALKE (78 aa)) form a coiled coil. Position 427 (lysine 427) interacts with ATP. The CW-type zinc-finger motif lies at 490 to 544 (AMQVPTTIQCDLCLKWRTLPFQLSAVEEGYPINWVCSMNPDPEQDQCEAFELKQK). Cysteine 499, cysteine 502, cysteine 525, and cysteine 536 together coordinate Zn(2+). A coiled-coil region spans residues 555–583 (KTQEERQKQLTEKIQQEQRKLKALKKIKP). Serine 615 is modified (phosphoserine). A Glycyl lysine isopeptide (Lys-Gly) (interchain with G-Cter in SUMO2) cross-link involves residue lysine 649. Phosphoserine is present on residues serine 690, serine 724, serine 733, and serine 737. Lysine 758 participates in a covalent cross-link: Glycyl lysine isopeptide (Lys-Gly) (interchain with G-Cter in SUMO2). Residues serine 768 and serine 770 each carry the phosphoserine modification. Residue threonine 827 is modified to Phosphothreonine. 2 positions are modified to phosphoserine: serine 846 and serine 851. A Glycyl lysine isopeptide (Lys-Gly) (interchain with G-Cter in SUMO2) cross-link involves residue lysine 922. A coiled-coil region spans residues 962–1001 (QAKVSEESLRISQKKLQETEEKLQKLRTNIQTLLQMAQQG).

As to quaternary structure, interacts with Morc2a. In terms of tissue distribution, protein is abundant in testes but not detected in other adult tissues examined (at protein level). Detected in germ cells with a distinct developmental-specific expression pattern but not in somatic cells such as Sertoli cells.

It is found in the nucleus. The catalysed reaction is ATP + H2O = ADP + phosphate + H(+). Required for chromosomal synapsis and meiotic recombination in males and females. This Mus musculus (Mouse) protein is ATPase MORC2B.